A 283-amino-acid chain; its full sequence is Phosphate import ATP-binding protein PstB 2 (283 aa).

The ABC transporter domain maps to 36-278 (LQVKQFNFYY…PKKKQTEDYI (243 aa)). 69-76 (GPSGCGKS) contributes to the ATP binding site.

The protein belongs to the ABC transporter superfamily. Phosphate importer (TC 3.A.1.7) family. In terms of assembly, the complex is composed of two ATP-binding proteins (PstB), two transmembrane proteins (PstC and PstA) and a solute-binding protein (PstS).

Its subcellular location is the cell inner membrane. The catalysed reaction is phosphate(out) + ATP + H2O = ADP + 2 phosphate(in) + H(+). Its function is as follows. Part of the ABC transporter complex PstSACB involved in phosphate import. Responsible for energy coupling to the transport system. The chain is Phosphate import ATP-binding protein PstB 2 from Nitrosococcus oceani (strain ATCC 19707 / BCRC 17464 / JCM 30415 / NCIMB 11848 / C-107).